Here is a 435-residue protein sequence, read N- to C-terminus: Ornithine decarboxylase (435 aa).

Residue Lys98 is modified to N6-(pyridoxal phosphate)lysine. Pyridoxal 5'-phosphate-binding positions include Ser230, Gly268, and 301–304 (EPGR). 344 to 345 (YD) contributes to the substrate binding site. Cys380 (proton donor; shared with dimeric partner) is an active-site residue. A substrate-binding site is contributed by Asp381. Tyr409 is a binding site for pyridoxal 5'-phosphate.

It belongs to the Orn/Lys/Arg decarboxylase class-II family. Homodimer. Only the dimer is catalytically active, as the active sites are constructed of residues from both monomers. Pyridoxal 5'-phosphate serves as cofactor.

The enzyme catalyses L-ornithine + H(+) = putrescine + CO2. Its pathway is amine and polyamine biosynthesis; putrescine biosynthesis via L-ornithine pathway; putrescine from L-ornithine: step 1/1. With respect to regulation, inhibited by antizyme (AZ) in response to polyamine levels. AZ inhibits the assembly of the functional homodimer by binding to ODC monomers and targeting them for ubiquitin-independent proteolytic destruction by the 26S proteasome. In terms of biological role, catalyzes the first and rate-limiting step of polyamine biosynthesis that converts ornithine into putrescine, which is the precursor for the polyamines, spermidine and spermine. Polyamines are essential for cell proliferation and are implicated in cellular processes, ranging from DNA replication to apoptosis. This chain is Ornithine decarboxylase (ODC), found in Capsicum annuum (Capsicum pepper).